The chain runs to 342 residues: Phosphate acyltransferase (342 aa).

This sequence belongs to the PlsX family. Homodimer. Probably interacts with PlsY.

It is found in the cytoplasm. The catalysed reaction is a fatty acyl-[ACP] + phosphate = an acyl phosphate + holo-[ACP]. It participates in lipid metabolism; phospholipid metabolism. Its function is as follows. Catalyzes the reversible formation of acyl-phosphate (acyl-PO(4)) from acyl-[acyl-carrier-protein] (acyl-ACP). This enzyme utilizes acyl-ACP as fatty acyl donor, but not acyl-CoA. The polypeptide is Phosphate acyltransferase (Leuconostoc mesenteroides subsp. mesenteroides (strain ATCC 8293 / DSM 20343 / BCRC 11652 / CCM 1803 / JCM 6124 / NCDO 523 / NBRC 100496 / NCIMB 8023 / NCTC 12954 / NRRL B-1118 / 37Y)).